Reading from the N-terminus, the 196-residue chain is Dehydrogenase RED3 (196 aa).

The NADP(+) site is built by S47, D74, N101, R134, Y166, and K170. The Proton acceptor role is filled by Y166. The active-site Lowers pKa of active site Tyr is the K170.

It belongs to the short-chain dehydrogenases/reductases (SDR) family.

The catalysed reaction is a primary alcohol + NAD(+) = an aldehyde + NADH + H(+). The enzyme catalyses a secondary alcohol + NAD(+) = a ketone + NADH + H(+). It functions in the pathway mycotoxin biosynthesis. Its function is as follows. Dehydrogenase; part of the Tox1B locus, one of the 2 loci that mediate the biosynthesis of T-toxin, a family of linear polyketides 37 to 45 carbons in length, of which the major component is 41 carbons, and which leads to high virulence to maize. One of the PKSs (PKS1 or PKS2) could synthesize a precursor, used subsequently by the other PKS as starter unit, to add additional carbons. Variability in the length of the final carbon backbone C35-47 could be achieved by varying the number of condensation cycles, or use of different starter or extender units or might be due to decarboxylation of the penultimate product, catalyzed by DEC1. Additional proteins are required for the biosynthesis of T-toxin, including oxidoreductases RED1, RED2, RED3, LAM1 and OXI1, as well as esterase TOX9. This chain is Dehydrogenase RED3, found in Cochliobolus heterostrophus (strain C4 / ATCC 48331 / race T) (Southern corn leaf blight fungus).